Here is a 64-residue protein sequence, read N- to C-terminus: Cytochrome c oxidase subunit 5C-2 (64 aa).

Residues serine 15–tryptophan 34 traverse the membrane as a helical segment.

The protein belongs to the cytochrome c oxidase subunit 5C family.

It localises to the mitochondrion inner membrane. Its function is as follows. This protein is one of the nuclear-coded polypeptide chains of cytochrome c oxidase, the terminal oxidase in mitochondrial electron transport. The protein is Cytochrome c oxidase subunit 5C-2 (COX5C2) of Helianthus annuus (Common sunflower).